The primary structure comprises 193 residues: Xanthine phosphoribosyltransferase (193 aa).

Xanthine is bound by residues leucine 20 and threonine 27. Residue 128–132 (ANGQA) coordinates 5-phospho-alpha-D-ribose 1-diphosphate. Lysine 156 lines the xanthine pocket.

The protein belongs to the purine/pyrimidine phosphoribosyltransferase family. Xpt subfamily. In terms of assembly, homodimer.

Its subcellular location is the cytoplasm. The catalysed reaction is XMP + diphosphate = xanthine + 5-phospho-alpha-D-ribose 1-diphosphate. It functions in the pathway purine metabolism; XMP biosynthesis via salvage pathway; XMP from xanthine: step 1/1. In terms of biological role, converts the preformed base xanthine, a product of nucleic acid breakdown, to xanthosine 5'-monophosphate (XMP), so it can be reused for RNA or DNA synthesis. The polypeptide is Xanthine phosphoribosyltransferase (Streptococcus agalactiae serotype Ia (strain ATCC 27591 / A909 / CDC SS700)).